The primary structure comprises 153 residues: Ribonuclease P protein component (153 aa).

Belongs to the RnpA family. In terms of assembly, consists of a catalytic RNA component (M1 or rnpB) and a protein subunit.

The enzyme catalyses Endonucleolytic cleavage of RNA, removing 5'-extranucleotides from tRNA precursor.. Its function is as follows. RNaseP catalyzes the removal of the 5'-leader sequence from pre-tRNA to produce the mature 5'-terminus. It can also cleave other RNA substrates such as 4.5S RNA. The protein component plays an auxiliary but essential role in vivo by binding to the 5'-leader sequence and broadening the substrate specificity of the ribozyme. The polypeptide is Ribonuclease P protein component (Helicobacter acinonychis (strain Sheeba)).